The following is a 300-amino-acid chain: MNQTYGRLVSRAAIAATAMASALLLIKILAWWYTGSVSILAALVDSLVDIAASLTNLLVVRYSLQPADDEHTFGHGKAESLAALAQSMFISGSALFLFLTSIQNLIKPTPMNDPGVGIGVTVIALICTIILVTFQRWVVRKTQSQAVRADMLHYQSDVMMNGAILIALGLSWYGWHRADALFALGIGIYILYSALRMGYEAVQSLLDRALPDAERQEIIDIVTSWPGVSGAHDLRTRQSGPTRFIQIHLEMEDNLPLVQAHFVADQVEQAILRRFPGSDVIIHQDPCSVVPREGRKFELV.

A helical transmembrane segment spans residues 24–44; sequence LLIKILAWWYTGSVSILAALV. Zn(2+)-binding residues include Asp-45 and Asp-49. A run of 2 helical transmembrane segments spans residues 82–102 and 114–134; these read AALAQSMFISGSALFLFLTSI and PGVGIGVTVIALICTIILVTF. Zn(2+) is bound by residues His-153 and Asp-157. 2 helical membrane passes run 156–176 and 178–198; these read SDVMMNGAILIALGLSWYGWH and ADALFALGIGIYILYSALRMG.

Belongs to the cation diffusion facilitator (CDF) transporter (TC 2.A.4) family. FieF subfamily. In terms of assembly, homodimer.

It localises to the cell inner membrane. It carries out the reaction Zn(2+)(in) + H(+)(out) = Zn(2+)(out) + H(+)(in). It catalyses the reaction Cd(2+)(in) + H(+)(out) = Cd(2+)(out) + H(+)(in). The enzyme catalyses Fe(2+)(in) + H(+)(out) = Fe(2+)(out) + H(+)(in). Its function is as follows. Divalent metal cation transporter which exports Zn(2+), Cd(2+) and possibly Fe(2+). May be involved in zinc and iron detoxification by efflux. In Salmonella agona (strain SL483), this protein is Cation-efflux pump FieF.